Here is a 358-residue protein sequence, read N- to C-terminus: Malate dehydrogenase 2, glyoxysomal (358 aa).

The transit peptide at 1 to 38 (MEFRGDANKRIAMISAHLQPSFTPQMEAKNSVMGRENC) directs the protein to the glyoxysome. NAD(+) contacts are provided by residues 53–59 (GAAGGIG) and D79. Residues R126 and R132 each coordinate substrate. NAD(+) contacts are provided by residues N139 and 162-164 (ISN). Positions 164 and 198 each coordinate substrate. H222 serves as the catalytic Proton acceptor. M273 serves as a coordination point for NAD(+).

This sequence belongs to the LDH/MDH superfamily. MDH type 1 family. In terms of assembly, homodimer.

It is found in the glyoxysome. The catalysed reaction is (S)-malate + NAD(+) = oxaloacetate + NADH + H(+). This is Malate dehydrogenase 2, glyoxysomal (MDH2) from Brassica napus (Rape).